The sequence spans 122 residues: Large ribosomal subunit protein uL14 (122 aa).

The protein belongs to the universal ribosomal protein uL14 family. Part of the 50S ribosomal subunit. Forms a cluster with proteins L3 and L19. In the 70S ribosome, L14 and L19 interact and together make contacts with the 16S rRNA in bridges B5 and B8.

In terms of biological role, binds to 23S rRNA. Forms part of two intersubunit bridges in the 70S ribosome. The chain is Large ribosomal subunit protein uL14 from Clostridium tetani (strain Massachusetts / E88).